Reading from the N-terminus, the 98-residue chain is Aspartyl/glutamyl-tRNA(Asn/Gln) amidotransferase subunit C (98 aa).

The tract at residues 75 to 98 is disordered; that stretch reads AQALSGAPAQEQQRFKVPQILGED.

Belongs to the GatC family. Heterotrimer of A, B and C subunits.

The catalysed reaction is L-glutamyl-tRNA(Gln) + L-glutamine + ATP + H2O = L-glutaminyl-tRNA(Gln) + L-glutamate + ADP + phosphate + H(+). It catalyses the reaction L-aspartyl-tRNA(Asn) + L-glutamine + ATP + H2O = L-asparaginyl-tRNA(Asn) + L-glutamate + ADP + phosphate + 2 H(+). Functionally, allows the formation of correctly charged Asn-tRNA(Asn) or Gln-tRNA(Gln) through the transamidation of misacylated Asp-tRNA(Asn) or Glu-tRNA(Gln) in organisms which lack either or both of asparaginyl-tRNA or glutaminyl-tRNA synthetases. The reaction takes place in the presence of glutamine and ATP through an activated phospho-Asp-tRNA(Asn) or phospho-Glu-tRNA(Gln). The chain is Aspartyl/glutamyl-tRNA(Asn/Gln) amidotransferase subunit C from Streptomyces griseus subsp. griseus (strain JCM 4626 / CBS 651.72 / NBRC 13350 / KCC S-0626 / ISP 5235).